The primary structure comprises 293 residues: Acetyl-coenzyme A carboxylase carboxyl transferase subunit beta (293 aa).

Residues 29–293 (LWVKCSECSQ…GVKELAEANI (265 aa)) form the CoA carboxyltransferase N-terminal domain. The Zn(2+) site is built by C33, C36, C52, and C55. The segment at 33-55 (CSECSQVAYRKDLISNFNVCSNC) adopts a C4-type zinc-finger fold.

It belongs to the AccD/PCCB family. In terms of assembly, acetyl-CoA carboxylase is a heterohexamer composed of biotin carboxyl carrier protein (AccB), biotin carboxylase (AccC) and two subunits each of ACCase subunit alpha (AccA) and ACCase subunit beta (AccD). Zn(2+) is required as a cofactor.

The protein localises to the cytoplasm. It carries out the reaction N(6)-carboxybiotinyl-L-lysyl-[protein] + acetyl-CoA = N(6)-biotinyl-L-lysyl-[protein] + malonyl-CoA. Its pathway is lipid metabolism; malonyl-CoA biosynthesis; malonyl-CoA from acetyl-CoA: step 1/1. In terms of biological role, component of the acetyl coenzyme A carboxylase (ACC) complex. Biotin carboxylase (BC) catalyzes the carboxylation of biotin on its carrier protein (BCCP) and then the CO(2) group is transferred by the transcarboxylase to acetyl-CoA to form malonyl-CoA. This chain is Acetyl-coenzyme A carboxylase carboxyl transferase subunit beta, found in Prochlorococcus marinus (strain MIT 9312).